Consider the following 417-residue polypeptide: Probable secreted beta-glucosidase PSU1 (417 aa).

Residues 1 to 18 (MRFFETLALALLTTGALA) form the signal peptide.

Belongs to the SUN family.

The protein resides in the secreted. It localises to the cell wall. Its function is as follows. Involved in cell wall synthesis. May be required for the activation of 1,3-beta-glucan synthase. The sequence is that of Probable secreted beta-glucosidase PSU1 (psu1) from Schizosaccharomyces pombe (strain 972 / ATCC 24843) (Fission yeast).